The following is a 598-amino-acid chain: NADH-quinone oxidoreductase subunit C/D (598 aa).

The interval 1–189 (MTDLTTSDSL…DPYVLTKQKE (189 aa)) is NADH dehydrogenase I subunit C. The interval 213–598 (DFMFLNLGPN…IDFVMSDVDR (386 aa)) is NADH dehydrogenase I subunit D.

The protein in the N-terminal section; belongs to the complex I 30 kDa subunit family. This sequence in the C-terminal section; belongs to the complex I 49 kDa subunit family. NDH-1 is composed of 13 different subunits. Subunits NuoB, CD, E, F, and G constitute the peripheral sector of the complex.

It localises to the cell inner membrane. The enzyme catalyses a quinone + NADH + 5 H(+)(in) = a quinol + NAD(+) + 4 H(+)(out). In terms of biological role, NDH-1 shuttles electrons from NADH, via FMN and iron-sulfur (Fe-S) centers, to quinones in the respiratory chain. The immediate electron acceptor for the enzyme in this species is believed to be ubiquinone. Couples the redox reaction to proton translocation (for every two electrons transferred, four hydrogen ions are translocated across the cytoplasmic membrane), and thus conserves the redox energy in a proton gradient. This Yersinia pseudotuberculosis serotype O:1b (strain IP 31758) protein is NADH-quinone oxidoreductase subunit C/D.